Consider the following 268-residue polypeptide: Ribosomal RNA small subunit methyltransferase A (268 aa).

S-adenosyl-L-methionine is bound by residues asparagine 23, leucine 25, glycine 50, glutamate 72, aspartate 94, and asparagine 116.

The protein belongs to the class I-like SAM-binding methyltransferase superfamily. rRNA adenine N(6)-methyltransferase family. RsmA subfamily.

The protein localises to the cytoplasm. The catalysed reaction is adenosine(1518)/adenosine(1519) in 16S rRNA + 4 S-adenosyl-L-methionine = N(6)-dimethyladenosine(1518)/N(6)-dimethyladenosine(1519) in 16S rRNA + 4 S-adenosyl-L-homocysteine + 4 H(+). Its function is as follows. Specifically dimethylates two adjacent adenosines (A1518 and A1519) in the loop of a conserved hairpin near the 3'-end of 16S rRNA in the 30S particle. May play a critical role in biogenesis of 30S subunits. This chain is Ribosomal RNA small subunit methyltransferase A, found in Mycoplasmoides gallisepticum (strain R(low / passage 15 / clone 2)) (Mycoplasma gallisepticum).